The primary structure comprises 220 residues: Vesicle-associated membrane protein 7 (220 aa).

Position 2 is an N-acetylalanine (Ala2). The Cytoplasmic segment spans residues 2 to 188 (AILFAVVARG…ARAMCMKNIK (187 aa)). The Longin domain occupies 7 to 110 (VVARGTTILA…AMNSEFSSVL (104 aa)). The v-SNARE coiled-coil homology domain maps to 125–185 (KVMETQAQVD…RNLARAMCMK (61 aa)). 2 positions are modified to phosphoserine: Ser167 and Ser168. The chain crosses the membrane as a helical; Anchor for type IV membrane protein span at residues 189 to 209 (LTIIIIIVSIVFIYIIVSLLC). Residues 210–220 (GGFTWPNCVKK) lie on the Vesicular side of the membrane.

It belongs to the synaptobrevin family. In terms of assembly, component of the SNARE complex composed of STX4, SNAP23 and VAMP7 that binds SYT7 during lysosomal exocytosis. Component of the SNARE complex composed of STX7, STX8, VAMP7 and VTI1B that is required for heterotypic fusion of late endosomes with lysosomes. May interact with STX17. Interacts with PICALM. Interacts with RAB21.

It is found in the cytoplasmic vesicle. It localises to the secretory vesicle membrane. The protein localises to the golgi apparatus. The protein resides in the trans-Golgi network membrane. Its subcellular location is the late endosome membrane. It is found in the lysosome membrane. It localises to the endoplasmic reticulum membrane. The protein localises to the phagosome membrane. The protein resides in the synapse. Its subcellular location is the synaptosome. In terms of biological role, involved in the targeting and/or fusion of transport vesicles to their target membrane during transport of proteins from the early endosome to the lysosome. Required for heterotypic fusion of late endosomes with lysosomes and homotypic lysosomal fusion. Required for calcium regulated lysosomal exocytosis. Involved in the export of chylomicrons from the endoplasmic reticulum to the cis Golgi. Required for exocytosis of mediators during eosinophil and neutrophil degranulation, and target cell killing by natural killer cells. Required for focal exocytosis of late endocytic vesicles during phagosome formation. The protein is Vesicle-associated membrane protein 7 (Vamp7) of Mus musculus (Mouse).